The primary structure comprises 207 residues: Protein TEX261 homolog (207 aa).

Transmembrane regions (helical) follow at residues F2–L22, I54–I74, Y94–F114, and I126–A146.

Belongs to the SVP26 family.

The protein resides in the membrane. The polypeptide is Protein TEX261 homolog (Dictyostelium discoideum (Social amoeba)).